The chain runs to 1028 residues: Endosome/lysosome-associated apoptosis and autophagy regulator family member 2 (1028 aa).

The first 47 residues, 1 to 47 (MLLLTLRRAKGRDRGRPAGGPRRALSLPWSPAWICCWALAGCQAVWA), serve as a signal peptide directing secretion. The Extracellular segment spans residues 48–928 (GDSSSSGRPL…TCETVDFWLK (881 aa)). The N-linked (GlcNAc...) asparagine glycan is linked to N168. 3 disulfide bridges follow: C292–C309, C322–C345, and C325–C357. N404 and N690 each carry an N-linked (GlcNAc...) asparagine glycan. The MRH domain maps to 671–876 (SDCFFYHEKE…LWESAEACPL (206 aa)). Intrachain disulfides connect C673–C719, C729–C757, C826–C862, and C838–C874. A helical membrane pass occupies residues 929–949 (VGAGVGAFTAVLLVALTCYFW). At 950 to 1028 (KKNQKLEYKY…QLKSSRCPNI (79 aa)) the chain is on the cytoplasmic side. Residue S1017 is modified to Phosphoserine.

It belongs to the ELAPOR family.

The protein resides in the cell membrane. Functions as a regulator of the BMP signaling pathway and may be involved in epidermal differentiation. The sequence is that of Endosome/lysosome-associated apoptosis and autophagy regulator family member 2 from Mus musculus (Mouse).